The sequence spans 400 residues: Aspartate/prephenate aminotransferase (400 aa).

The L-aspartate site is built by G39, W125, and N175. K239 carries the N6-(pyridoxal phosphate)lysine modification. R375 is a binding site for L-aspartate.

It belongs to the class-I pyridoxal-phosphate-dependent aminotransferase family. As to quaternary structure, homodimer. Pyridoxal 5'-phosphate is required as a cofactor.

Its subcellular location is the cytoplasm. The enzyme catalyses L-aspartate + 2-oxoglutarate = oxaloacetate + L-glutamate. The catalysed reaction is L-arogenate + 2-oxoglutarate = prephenate + L-glutamate. In terms of biological role, catalyzes the reversible conversion of aspartate and 2-oxoglutarate to glutamate and oxaloacetate. Can also transaminate prephenate in the presence of glutamate. Required for symbiotic nitrogen fixation. The chain is Aspartate/prephenate aminotransferase from Rhizobium meliloti (strain 1021) (Ensifer meliloti).